A 242-amino-acid polypeptide reads, in one-letter code: 2-C-methyl-D-erythritol 4-phosphate cytidylyltransferase (242 aa).

This sequence belongs to the IspD/TarI cytidylyltransferase family. IspD subfamily.

The enzyme catalyses 2-C-methyl-D-erythritol 4-phosphate + CTP + H(+) = 4-CDP-2-C-methyl-D-erythritol + diphosphate. It functions in the pathway isoprenoid biosynthesis; isopentenyl diphosphate biosynthesis via DXP pathway; isopentenyl diphosphate from 1-deoxy-D-xylulose 5-phosphate: step 2/6. Catalyzes the formation of 4-diphosphocytidyl-2-C-methyl-D-erythritol from CTP and 2-C-methyl-D-erythritol 4-phosphate (MEP). This is 2-C-methyl-D-erythritol 4-phosphate cytidylyltransferase from Vesicomyosocius okutanii subsp. Calyptogena okutanii (strain HA).